The primary structure comprises 151 residues: MTTDTHTLHIEEILELLPHRYPFLLVDRVLDFEEGRFLRAVKNVSVNEPFFQGHFPGKPILPGVLILEAMAQATGILAFKSVGKLEPGELYYFAGIDEARFKRPVVPGDQMIMEVTFEKTRRGLTRFKGVALVDGKVVCEATMMCARSREA.

His54 is an active-site residue.

This sequence belongs to the thioester dehydratase family. FabZ subfamily.

The protein resides in the cytoplasm. It carries out the reaction a (3R)-hydroxyacyl-[ACP] = a (2E)-enoyl-[ACP] + H2O. In terms of biological role, involved in unsaturated fatty acids biosynthesis. Catalyzes the dehydration of short chain beta-hydroxyacyl-ACPs and long chain saturated and unsaturated beta-hydroxyacyl-ACPs. This chain is 3-hydroxyacyl-[acyl-carrier-protein] dehydratase FabZ, found in Klebsiella pneumoniae (strain 342).